The sequence spans 393 residues: Sugar efflux transporter A (393 aa).

A run of 12 helical transmembrane segments spans residues 22-42 (VIAFLTGIAGALQLPTLSLFL), 51-71 (FMVGLFYTGSAVIGIVVSQIL), 82-102 (KTLILQCCLLGALACLLYAWN), 107-127 (VLLFIGVLLSSFGSTANPQLF), 152-172 (ISLSWVIGPPVAFALALGFGF), 174-194 (AMYLTAAVVFVLCGLLVWLLL), 219-239 (LLLFTACTLMWTCNGIYLINM), 253-273 (LAGVMMGTAAGLEIPVMLLAG), 287-307 (LAVIAGLIFYTGLTLLNGSWA), 308-328 (LLALQLLNAIFIGILAGMGML), 344-364 (LFTNTTRVGWIISGSLAGIVA), and 366-386 (VWSYHAGFVIAIAMLAGAAVC).

It belongs to the major facilitator superfamily. Set transporter family.

Its subcellular location is the cell inner membrane. Functionally, involved in the efflux of sugars. The physiological role may be the reduction of the intracellular concentration of toxic sugars or sugar metabolites. Transports IPTG, lactose and arabinose. The sequence is that of Sugar efflux transporter A (sotA) from Dickeya chrysanthemi (Pectobacterium chrysanthemi).